The primary structure comprises 436 residues: Chorion-specific transcription factor GCMa (436 aa).

The segment at residues 14–169 (LSWDINDMKL…KLEAEARRAM (156 aa)) is a DNA-binding region (GCM). 8 residues coordinate Zn(2+): cysteine 76, cysteine 82, cysteine 86, cysteine 113, cysteine 116, cysteine 125, histidine 152, and histidine 154.

Polyubiquitinated in the presence of UBE2D2 and FBXW2 (in vitro).

The protein localises to the nucleus. Functionally, transcription factor involved in the control of expression of placental growth factor (PGF) and other placenta-specific genes. Binds to the trophoblast-specific element 2 (TSE2) of the aromatase gene enhancer. Binds to the SYDE1 promoter. Has a central role in mediating the differentiation of trophoblast cells along both the villous and extravillous pathways in placental development. This is Chorion-specific transcription factor GCMa (Gcm1) from Rattus norvegicus (Rat).